We begin with the raw amino-acid sequence, 492 residues long: Catalase (492 aa).

Active-site residues include histidine 65 and asparagine 138. Heme is bound at residue tyrosine 348.

Belongs to the catalase family. Homotetramer. Heme serves as cofactor. In stems, leaves, roots and developing fruits.

The protein localises to the cytoplasm. The protein resides in the cytosol. Its subcellular location is the peroxisome matrix. The enzyme catalyses 2 H2O2 = O2 + 2 H2O. Catalyzes the degradation of hydrogen peroxide (H(2)O(2)) generated by peroxisomal oxidases to water and oxygen, thereby protecting cells from the toxic effects of hydrogen peroxide. The polypeptide is Catalase (CAT) (Capsicum annuum (Capsicum pepper)).